Consider the following 385-residue polypeptide: DNA replication and repair protein RecF (385 aa).

G30–T37 lines the ATP pocket.

It belongs to the RecF family.

It is found in the cytoplasm. The RecF protein is involved in DNA metabolism; it is required for DNA replication and normal SOS inducibility. RecF binds preferentially to single-stranded, linear DNA. It also seems to bind ATP. The protein is DNA replication and repair protein RecF of Herpetosiphon aurantiacus (strain ATCC 23779 / DSM 785 / 114-95).